The following is a 166-amino-acid chain: Large ribosomal subunit protein mL41 (166 aa).

A mitochondrion-targeting transit peptide spans M1–E26. Residues K136–F166 are disordered.

Belongs to the mitochondrion-specific ribosomal protein mL41 family. As to quaternary structure, component of the mitochondrial ribosome large subunit (39S) which comprises a 16S rRNA and about 50 distinct proteins.

The protein resides in the mitochondrion. This chain is Large ribosomal subunit protein mL41 (mRpL41), found in Drosophila melanogaster (Fruit fly).